Reading from the N-terminus, the 328-residue chain is MSIFSRIAGTGSYLPELRLTNQDLVERLAKTGLETSDEWIATRSGISARHFAAENELTSDLALKAAQAALSSAGITSSDLDLIILATSTPDHLGGFPSTACVVQDKLGAHTACAAFDVQAVCAGFTYALATADAFIRTGSYKKVLVIGAETFSRILDFQDRGTCVLFGDGAGAVVLEASSEPGILSTALHADGSQRDILCVPGRSGNGAVHGSPFMTMDGQAVFKLAVKVLEQVAHEVLAKANLKPEQIDWLVPHQANIRIMEGTAKKMGMSMDKVIVTVHEHGNTSAASIPLALDCGIRSGQIQRGQHLLLEGVGGGFAWGAVALKY.

Residues Cys122 and His255 contribute to the active site. The segment at 256-260 (QANIR) is ACP-binding. Residue Asn285 is part of the active site.

Belongs to the thiolase-like superfamily. FabH family. In terms of assembly, homodimer.

Its subcellular location is the cytoplasm. The catalysed reaction is malonyl-[ACP] + acetyl-CoA + H(+) = 3-oxobutanoyl-[ACP] + CO2 + CoA. It functions in the pathway lipid metabolism; fatty acid biosynthesis. Catalyzes the condensation reaction of fatty acid synthesis by the addition to an acyl acceptor of two carbons from malonyl-ACP. Catalyzes the first condensation reaction which initiates fatty acid synthesis and may therefore play a role in governing the total rate of fatty acid production. Possesses both acetoacetyl-ACP synthase and acetyl transacylase activities. Its substrate specificity determines the biosynthesis of branched-chain and/or straight-chain of fatty acids. This is Beta-ketoacyl-[acyl-carrier-protein] synthase III from Polynucleobacter asymbioticus (strain DSM 18221 / CIP 109841 / QLW-P1DMWA-1) (Polynucleobacter necessarius subsp. asymbioticus).